A 397-amino-acid chain; its full sequence is COP9 signalosome complex subunit 4 (397 aa).

Met-1 bears the N-acetylmethionine mark. Positions 197 to 365 (ALRYYGISQI…AVIHFEDDVE (169 aa)) constitute a PCI domain.

It belongs to the CSN4 family. As to quaternary structure, component of the CSN complex, probably composed of CSN1, CSN2, CSN3, CSN4, CSN5 (CSN5A or CSN5B), CSN6 (CSN6A or CSN6B), CSN7 and CSN8. Interacts with itself. In the complex, it is located in the center and probably interacts directly with CSN1, CSN2, CSN3, CSN4, CSN5A or CSN5B, CSN6A or CSN6B, CSN7 and CSN8. Interacts with COP10. Binds to the translation initiation factors TIF3E1.

Its subcellular location is the cytoplasm. It localises to the nucleus. In terms of biological role, component of the COP9 signalosome complex (CSN), a complex involved in various cellular and developmental processes such as photomorphogenesis and auxin and jasmonate responses. The CSN complex is an essential regulator of the ubiquitin (Ubl) conjugation pathway by mediating the deneddylation of the cullin subunits of SCF-type E3 ligase complexes, leading to decrease the Ubl ligase activity of SCF. It is involved in repression of photomorphogenesis in darkness by regulating the activity of COP1-containing Ubl ligase complexes. The complex is also required for degradation of IAA6 by regulating the activity of the Ubl ligase SCF-TIR complex. The chain is COP9 signalosome complex subunit 4 (CSN4) from Arabidopsis thaliana (Mouse-ear cress).